The sequence spans 156 residues: SsrA-binding protein (156 aa).

The protein belongs to the SmpB family.

The protein resides in the cytoplasm. In terms of biological role, required for rescue of stalled ribosomes mediated by trans-translation. Binds to transfer-messenger RNA (tmRNA), required for stable association of tmRNA with ribosomes. tmRNA and SmpB together mimic tRNA shape, replacing the anticodon stem-loop with SmpB. tmRNA is encoded by the ssrA gene; the 2 termini fold to resemble tRNA(Ala) and it encodes a 'tag peptide', a short internal open reading frame. During trans-translation Ala-aminoacylated tmRNA acts like a tRNA, entering the A-site of stalled ribosomes, displacing the stalled mRNA. The ribosome then switches to translate the ORF on the tmRNA; the nascent peptide is terminated with the 'tag peptide' encoded by the tmRNA and targeted for degradation. The ribosome is freed to recommence translation, which seems to be the essential function of trans-translation. Required for trans-translation. Probably required for sporulation; deletion of the gene for tmRNA impairs sporulation via its effect on trans-translation, and as smpB is required for trans-translation under non-stress conditions, it is also probably required during sporulation. In Bacillus subtilis (strain 168), this protein is SsrA-binding protein.